The chain runs to 466 residues: Glutamate--tRNA ligase 2 (466 aa).

The short motif at Pro-9 to Gly-19 is the 'HIGH' region element. A 'KMSKS' region motif is present at residues Lys-236–Arg-240. Residue Lys-239 coordinates ATP.

It belongs to the class-I aminoacyl-tRNA synthetase family. Glutamate--tRNA ligase type 1 subfamily. As to quaternary structure, monomer.

It is found in the cytoplasm. It carries out the reaction tRNA(Glu) + L-glutamate + ATP = L-glutamyl-tRNA(Glu) + AMP + diphosphate. In terms of biological role, catalyzes the attachment of glutamate to tRNA(Glu) in a two-step reaction: glutamate is first activated by ATP to form Glu-AMP and then transferred to the acceptor end of tRNA(Glu). The chain is Glutamate--tRNA ligase 2 from Anaplasma marginale (strain St. Maries).